The following is a 344-amino-acid chain: S-adenosylmethionine:tRNA ribosyltransferase-isomerase (344 aa).

It belongs to the QueA family. As to quaternary structure, monomer.

Its subcellular location is the cytoplasm. It catalyses the reaction 7-aminomethyl-7-carbaguanosine(34) in tRNA + S-adenosyl-L-methionine = epoxyqueuosine(34) in tRNA + adenine + L-methionine + 2 H(+). It participates in tRNA modification; tRNA-queuosine biosynthesis. Transfers and isomerizes the ribose moiety from AdoMet to the 7-aminomethyl group of 7-deazaguanine (preQ1-tRNA) to give epoxyqueuosine (oQ-tRNA). This is S-adenosylmethionine:tRNA ribosyltransferase-isomerase from Levilactobacillus brevis (strain ATCC 367 / BCRC 12310 / CIP 105137 / JCM 1170 / LMG 11437 / NCIMB 947 / NCTC 947) (Lactobacillus brevis).